The primary structure comprises 72 residues: Translational regulator CsrA (72 aa).

The protein belongs to the CsrA/RsmA family. In terms of assembly, homodimer; the beta-strands of each monomer intercalate to form a hydrophobic core, while the alpha-helices form wings that extend away from the core.

It is found in the cytoplasm. A translational regulator that binds mRNA to regulate translation initiation and/or mRNA stability. Usually binds in the 5'-UTR at or near the Shine-Dalgarno sequence preventing ribosome-binding, thus repressing translation. Its main target seems to be the major flagellin gene, while its function is anatagonized by FliW. This is Translational regulator CsrA from Clostridium botulinum (strain Okra / Type B1).